The chain runs to 427 residues: Enolase (427 aa).

Glutamine 163 contacts (2R)-2-phosphoglycerate. The Proton donor role is filled by glutamate 205. Residues aspartate 242, glutamate 285, and aspartate 312 each coordinate Mg(2+). Residues lysine 337, arginine 366, serine 367, and lysine 388 each contribute to the (2R)-2-phosphoglycerate site. Residue lysine 337 is the Proton acceptor of the active site.

This sequence belongs to the enolase family. Mg(2+) is required as a cofactor.

It localises to the cytoplasm. Its subcellular location is the secreted. It is found in the cell surface. It carries out the reaction (2R)-2-phosphoglycerate = phosphoenolpyruvate + H2O. It participates in carbohydrate degradation; glycolysis; pyruvate from D-glyceraldehyde 3-phosphate: step 4/5. Its function is as follows. Catalyzes the reversible conversion of 2-phosphoglycerate (2-PG) into phosphoenolpyruvate (PEP). It is essential for the degradation of carbohydrates via glycolysis. This Herminiimonas arsenicoxydans protein is Enolase.